Here is a 358-residue protein sequence, read N- to C-terminus: Neutral protease 2 homolog MGYG_02351 (358 aa).

The signal sequence occupies residues 1-17 (MQFVALLAALGAPLALA). A propeptide spanning residues 18–183 (ASIPAAHNNS…DSPAGVIDKR (166 aa)) is cleaved from the precursor. 2 cysteine pairs are disulfide-bonded: cysteine 191–cysteine 260 and cysteine 267–cysteine 285. Histidine 309 is a binding site for Zn(2+). The active site involves glutamate 310. Zn(2+)-binding residues include histidine 313 and aspartate 324.

Belongs to the peptidase M35 family. Zn(2+) serves as cofactor.

The protein resides in the secreted. It carries out the reaction Preferential cleavage of bonds with hydrophobic residues in P1'. Also 3-Asn-|-Gln-4 and 8-Gly-|-Ser-9 bonds in insulin B chain.. Functionally, secreted metalloproteinase that allows assimilation of proteinaceous substrates. Shows high activities on basic nuclear substrates such as histone and protamine. May be involved in virulence. The polypeptide is Neutral protease 2 homolog MGYG_02351 (Arthroderma gypseum (strain ATCC MYA-4604 / CBS 118893) (Microsporum gypseum)).